Reading from the N-terminus, the 166-residue chain is Interferon gamma (166 aa).

The signal sequence occupies residues 1-23 (MKYTSYFLALLLCVLLGFSGSYG). Glutamine 24 carries the pyrrolidone carboxylic acid modification. N-linked (GlcNAc...) asparagine glycans are attached at residues asparagine 39 and asparagine 106.

Belongs to the type II (or gamma) interferon family. In terms of assembly, homodimer. Interacts with IFNGR1 (via extracellular domain); this interaction promotes IFNGR1 dimerization. As to expression, released primarily from activated T lymphocytes.

It is found in the secreted. Functionally, type II interferon produced by immune cells such as T-cells and NK cells that plays crucial roles in antimicrobial, antiviral, and antitumor responses by activating effector immune cells and enhancing antigen presentation. Primarily signals through the JAK-STAT pathway after interaction with its receptor IFNGR1 to affect gene regulation. Upon IFNG binding, IFNGR1 intracellular domain opens out to allow association of downstream signaling components JAK2, JAK1 and STAT1, leading to STAT1 activation, nuclear translocation and transcription of IFNG-regulated genes. Many of the induced genes are transcription factors such as IRF1 that are able to further drive regulation of a next wave of transcription. Plays a role in class I antigen presentation pathway by inducing a replacement of catalytic proteasome subunits with immunoproteasome subunits. In turn, increases the quantity, quality, and repertoire of peptides for class I MHC loading. Increases the efficiency of peptide generation also by inducing the expression of activator PA28 that associates with the proteasome and alters its proteolytic cleavage preference. Up-regulates as well MHC II complexes on the cell surface by promoting expression of several key molecules such as cathepsins B/CTSB, H/CTSH, and L/CTSL. Participates in the regulation of hematopoietic stem cells during development and under homeostatic conditions by affecting their development, quiescence, and differentiation. In Bubalus bubalis (Domestic water buffalo), this protein is Interferon gamma (IFNG).